We begin with the raw amino-acid sequence, 391 residues long: Succinate--CoA ligase [ADP-forming] subunit beta (391 aa).

The ATP-grasp domain maps to 9 to 246 (KHLFTEAGIA…LTQEDETEVR (238 aa)). Residues K46, 53 to 55 (GRG), E99, L102, and E107 contribute to the ATP site. Positions 199 and 213 each coordinate Mg(2+). Substrate is bound by residues N266 and 323–325 (GIV).

Belongs to the succinate/malate CoA ligase beta subunit family. As to quaternary structure, heterotetramer of two alpha and two beta subunits. Requires Mg(2+) as cofactor.

It catalyses the reaction succinate + ATP + CoA = succinyl-CoA + ADP + phosphate. The enzyme catalyses GTP + succinate + CoA = succinyl-CoA + GDP + phosphate. It participates in carbohydrate metabolism; tricarboxylic acid cycle; succinate from succinyl-CoA (ligase route): step 1/1. Succinyl-CoA synthetase functions in the citric acid cycle (TCA), coupling the hydrolysis of succinyl-CoA to the synthesis of either ATP or GTP and thus represents the only step of substrate-level phosphorylation in the TCA. The beta subunit provides nucleotide specificity of the enzyme and binds the substrate succinate, while the binding sites for coenzyme A and phosphate are found in the alpha subunit. This is Succinate--CoA ligase [ADP-forming] subunit beta from Halorhodospira halophila (strain DSM 244 / SL1) (Ectothiorhodospira halophila (strain DSM 244 / SL1)).